A 570-amino-acid polypeptide reads, in one-letter code: Proline--tRNA ligase (570 aa).

Belongs to the class-II aminoacyl-tRNA synthetase family. ProS type 1 subfamily. As to quaternary structure, homodimer.

It localises to the cytoplasm. The enzyme catalyses tRNA(Pro) + L-proline + ATP = L-prolyl-tRNA(Pro) + AMP + diphosphate. In terms of biological role, catalyzes the attachment of proline to tRNA(Pro) in a two-step reaction: proline is first activated by ATP to form Pro-AMP and then transferred to the acceptor end of tRNA(Pro). As ProRS can inadvertently accommodate and process non-cognate amino acids such as alanine and cysteine, to avoid such errors it has two additional distinct editing activities against alanine. One activity is designated as 'pretransfer' editing and involves the tRNA(Pro)-independent hydrolysis of activated Ala-AMP. The other activity is designated 'posttransfer' editing and involves deacylation of mischarged Ala-tRNA(Pro). The misacylated Cys-tRNA(Pro) is not edited by ProRS. The sequence is that of Proline--tRNA ligase from Pelotomaculum thermopropionicum (strain DSM 13744 / JCM 10971 / SI).